Here is a 362-residue protein sequence, read N- to C-terminus: Alkanal monooxygenase alpha chain (362 aa).

The protein belongs to the bacterial luciferase oxidoreductase family. As to quaternary structure, heterodimer of an alpha and a beta chain.

It catalyses the reaction a long-chain fatty aldehyde + FMNH2 + O2 = a long-chain fatty acid + hnu + FMN + H2O + 2 H(+). Its function is as follows. Light-emitting reaction in luminous bacteria. The sequence is that of Alkanal monooxygenase alpha chain (luxA) from Photorhabdus luminescens (Xenorhabdus luminescens).